Consider the following 208-residue polypeptide: UPF0637 protein BCQ_3749 (208 aa).

The protein belongs to the UPF0637 family.

The sequence is that of UPF0637 protein BCQ_3749 from Bacillus cereus (strain Q1).